The following is a 462-amino-acid chain: GTPase Der (462 aa).

2 EngA-type G domains span residues 9-171 (KTIA…NLNQ) and 201-372 (IQVG…ECFS). GTP-binding positions include 15-22 (GQPNVGKS), 62-66 (DTGGM), 123-126 (NKID), 207-214 (GRVNVGKS), 254-258 (DTAGI), and 318-321 (NKWD). The KH-like domain occupies 373–457 (KRIPTSLLNS…PLILNAKDKK (85 aa)).

Belongs to the TRAFAC class TrmE-Era-EngA-EngB-Septin-like GTPase superfamily. EngA (Der) GTPase family. As to quaternary structure, associates with the 50S ribosomal subunit.

Its function is as follows. GTPase that plays an essential role in the late steps of ribosome biogenesis. The polypeptide is GTPase Der (Helicobacter pylori (strain P12)).